The chain runs to 201 residues: Large ribosomal subunit protein uL4 (201 aa).

The interval 44–71 is disordered; it reads RAQKTRAEVTGSGKKPWRQKGTGRARSG.

This sequence belongs to the universal ribosomal protein uL4 family. Part of the 50S ribosomal subunit.

Functionally, one of the primary rRNA binding proteins, this protein initially binds near the 5'-end of the 23S rRNA. It is important during the early stages of 50S assembly. It makes multiple contacts with different domains of the 23S rRNA in the assembled 50S subunit and ribosome. In terms of biological role, forms part of the polypeptide exit tunnel. This chain is Large ribosomal subunit protein uL4, found in Enterobacter sp. (strain 638).